The chain runs to 244 residues: CTD nuclear envelope phosphatase 1 (244 aa).

Residues 7 to 29 (LLGLRGFVAFAAKLWSFVLYLLR) form a helical membrane-spanning segment. One can recognise an FCP1 homology domain in the interval 58–225 (QVKRKVLVLD…NLLPMLDALR (168 aa)).

This sequence belongs to the dullard family. In terms of assembly, interacts with bmpr1a, bmpr1b and bmpr2.

The protein resides in the membrane. It is found in the cytoplasm. It localises to the perinuclear region. The catalysed reaction is O-phospho-L-seryl-[protein] + H2O = L-seryl-[protein] + phosphate. It catalyses the reaction O-phospho-L-threonyl-[protein] + H2O = L-threonyl-[protein] + phosphate. In terms of biological role, serine/threonine protein phosphatase that may dephosphorylate and activate lipins. Lipins are phosphatidate phosphatases that catalyze the conversion of phosphatidic acid to diacylglycerol and control the metabolism of fatty acids at different levels. May indirectly modulate the lipid composition of nuclear and/or endoplasmic reticulum membranes and be required for proper nuclear membrane morphology and/or dynamics. May also indirectly regulate the production of lipid droplets and triacylglycerol. Induces neuronal differentiation by antagonizing BMP signaling. Acts both by dephosphorylating BMPR1A and by promoting BMPR2 proteasomal degradation. This chain is CTD nuclear envelope phosphatase 1 (ctdnep1), found in Xenopus laevis (African clawed frog).